A 199-amino-acid chain; its full sequence is dCTP deaminase, dUMP-forming (199 aa).

Residues 101–106, Asp-119, 127–129, Gln-148, Tyr-162, and Gln-174 each bind dCTP; these read KSSLGR and TLE. Catalysis depends on Glu-129, which acts as the Proton donor/acceptor. Residues 163–199 are disordered; it reads GSAAAGSKYQGQRGPTPSRSYLNFPLPSDAVDAVESR. Polar residues predominate over residues 171–183; it reads YQGQRGPTPSRSY.

The protein belongs to the dCTP deaminase family. Homotrimer.

The catalysed reaction is dCTP + 2 H2O = dUMP + NH4(+) + diphosphate. It functions in the pathway pyrimidine metabolism; dUMP biosynthesis; dUMP from dCTP: step 1/1. Bifunctional enzyme that catalyzes both the deamination of dCTP to dUTP and the hydrolysis of dUTP to dUMP without releasing the toxic dUTP intermediate. This chain is dCTP deaminase, dUMP-forming, found in Nocardia farcinica (strain IFM 10152).